We begin with the raw amino-acid sequence, 146 residues long: Mitochondrial import receptor subunit TOM20 homolog B (146 aa).

Topologically, residues 1–5 (MMGGS) are mitochondrial intermembrane. A helical membrane pass occupies residues 6 to 25 (SSRIAAGLGAALFVGYCIYF). At 26-146 (DRKRRSDPNY…AQSISDDDIE (121 aa)) the chain is on the cytoplasmic side. Residues 37–47 (NKLRERRKKQK) are compositionally biased toward basic residues. The segment at 37–56 (NKLRERRKKQKAAQEKAGLS) is disordered. A Phosphoserine modification is found at S141.

This sequence belongs to the Tom20 family. In terms of assembly, forms part of the preprotein translocase complex of the outer mitochondrial membrane (TOM complex). Interacts with tom22.

The protein localises to the mitochondrion outer membrane. In terms of biological role, central component of the receptor complex responsible for the recognition and translocation of cytosolically synthesized mitochondrial preproteins. Together with tom22 functions as the transit peptide receptor at the surface of the mitochondrion outer membrane and facilitates the movement of preproteins into the tom40 translocation pore. In Danio rerio (Zebrafish), this protein is Mitochondrial import receptor subunit TOM20 homolog B (tomm20b).